Here is a 176-residue protein sequence, read N- to C-terminus: NAD(P)H-quinone oxidoreductase subunit 6, chloroplastic (176 aa).

A run of 5 helical transmembrane segments spans residues 10–30 (FLLVFLGSGLLVGGLGVVLLP), 32–52 (PIFSAFSLGFVLVCISLLYIL), 61–81 (AQLLIYVGAINVLIIFAVMFM), 92–112 (LWTVGNGITSLVCTTILFLLM), and 152–172 (FFLPFELISIILLVALIGAIS).

It belongs to the complex I subunit 6 family. NDH is composed of at least 16 different subunits, 5 of which are encoded in the nucleus.

Its subcellular location is the plastid. The protein resides in the chloroplast thylakoid membrane. It carries out the reaction a plastoquinone + NADH + (n+1) H(+)(in) = a plastoquinol + NAD(+) + n H(+)(out). It catalyses the reaction a plastoquinone + NADPH + (n+1) H(+)(in) = a plastoquinol + NADP(+) + n H(+)(out). NDH shuttles electrons from NAD(P)H:plastoquinone, via FMN and iron-sulfur (Fe-S) centers, to quinones in the photosynthetic chain and possibly in a chloroplast respiratory chain. The immediate electron acceptor for the enzyme in this species is believed to be plastoquinone. Couples the redox reaction to proton translocation, and thus conserves the redox energy in a proton gradient. The sequence is that of NAD(P)H-quinone oxidoreductase subunit 6, chloroplastic (ndhG) from Capsella bursa-pastoris (Shepherd's purse).